Reading from the N-terminus, the 98-residue chain is Small ribosomal subunit protein eS24 (98 aa).

Belongs to the eukaryotic ribosomal protein eS24 family. As to quaternary structure, part of the 30S ribosomal subunit.

This is Small ribosomal subunit protein eS24 from Thermococcus kodakarensis (strain ATCC BAA-918 / JCM 12380 / KOD1) (Pyrococcus kodakaraensis (strain KOD1)).